The following is a 1066-amino-acid chain: MPVFHTRTIESILEPVAQQISHLVIMHEEGEVDGKAIPDLTAPVAAVQAAVSNLVRVGKETVQTTEDQILKRDMPPAFIKVENACTKLVQAAQMLQSDPYSVPARDYLIDGSRGILSGTSDLLLTFDEAEVRKIIRVCKGILEYLTVAEVVETMEDLVTYTKNLGPGMTKMAKMIDERQQELTHQEHRVMLVNSMNTVKELLPVLISAMKIFVTTKNSKNQGIEEALKNRNFTVGKMSAEINEIIRVLQLTSWDEDAWASKDTEAMKRALASIDSKLNQAKGWLRDPNASPGDAGEQAIRQILDEAGKVGELCAGKERREILGTCKMLGQMTDQVADLRARGQGASPVAMQKAQQVSQGLDVLTAKVENAARKLEAMTNSKQSIAKKIDAAQNWLADPNGGPEGEEQIRGALAEARKIAELCDDPKERDDILRSLGEIAALTSKLGDLRRQGKGDSPEARALAKQVATALQNLQTKTNRAVANSRPAKAAVHLEGKIEQAQRWIDNPTVDDRGVGQAAIRGLVAEGHRLANVMMGPYRQDLLAKCDRVDQLAAQLADLAARGEGESPQARALASQLQDSLKDLKTQMQEAMTQEVSDVFSDTTTPIKLLAVAATAPPDAPNREEVFDERAANFENHSGRLGATAEKAAAVGAANKSTVEGIQASVKTARELTPQVISAARILLRNPGNQAAYEHFETMKNQWIDNVEKMTGLVDEAIDTKSLLDASEEAIKKDLDKCKVAMANIQPQMLVAGATSIARRANRILLVAKREVENSEDPKFREAVKAASDELSKTISPMVMDAKAVAGNISDPGLQKSFLDSGYRILGAVAKVREAFQPQEPDFPPPPPDLEQLRLTDELAPPKPPLPEGEVPPPRPPPPEEKDEEFPEQKAGEVINQPMMMAARQLHDEARKWSSKGNDIIAAAKRMALLMAEMSRLVRGGSGTKRALIQCAKDIAKASDEVTRLAKEVAKQCTDKRIRTNLLQVCERIPTISTQLKILSTVKATMLGRTNISDEESEQATEMLVHNAQNLMQSVKETVREAEAASIKIRTDAGFTLRWVRKTPWYQ.

Residues 1–835 (MPVFHTRTIE…GAVAKVREAF (835 aa)) form an N-terminal globular head region. A Phosphoserine modification is found at serine 97. Positions 168–208 (MTKMAKMIDERQQELTHQEHRVMLVNSMNTVKELLPVLISA) are talin-interaction. At lysine 173 the chain carries N6-acetyllysine. 3 consecutive repeat copies span residues 259-369 (ASKD…KVEN), 370-479 (AARK…KTNR), and 480-589 (AVAN…QMQE). The interval 259 to 589 (ASKDTEAMKR…LKDLKTQMQE (331 aa)) is 3 X 112 AA tandem repeats. A phosphoserine mark is found at serine 260, serine 272, serine 275, serine 290, serine 346, and serine 434. Lysine 496 carries the post-translational modification N6-acetyllysine. At tyrosine 537 the chain carries Phosphotyrosine. Phosphoserine occurs at positions 574, 579, and 600. Residues threonine 604 and threonine 672 each carry the phosphothreonine modification. Serine 721 is modified (phosphoserine). The interaction with ACTN4 stretch occupies residues 741–764 (MANIQPQMLVAGATSIARRANRIL). A phosphoserine mark is found at serine 795 and serine 809. A Phosphotyrosine modification is found at tyrosine 822. The segment at 836–878 (QPQEPDFPPPPPDLEQLRLTDELAPPKPPLPEGEVPPPRPPPP) is linker (Pro-rich). A disordered region spans residues 857–887 (ELAPPKPPLPEGEVPPPRPPPPEEKDEEFPE). Pro residues predominate over residues 860–876 (PPKPPLPEGEVPPPRPP). Residues 879 to 1066 (EEKDEEFPEQ…RWVRKTPWYQ (188 aa)) form a C-terminal tail region. Facilitates phospholipid membrane insertion stretches follow at residues 935–978 (RLVR…KRIR) and 1052–1066 (AGFT…PWYQ). Tyrosine 1065 bears the Phosphotyrosine; by SRC-type Tyr-kinases mark.

Belongs to the vinculin/alpha-catenin family. In terms of assembly, exhibits self-association properties. Part of a complex composed of THSD1, PTK2/FAK1, TLN1 and VCL. Interacts with APBB1IP, NRAP and TLN1. Interacts with CTNNB1 and this interaction is necessary for its localization to the cell-cell junctions and for its function in regulating cell surface expression of E-cadherin. Interacts with SORBS1. Interacts with SYNM. Interacts with CTNNA1. Binds to ACTN4; this interaction triggers conformational changes. Interacts with FLII. Phosphorylated; on serines, threonines and tyrosines. Phosphorylation on Tyr-1065 in activated platelets affects head-tail interactions and cell spreading but has no effect on actin binding nor on localization to focal adhesion plaques. Post-translationally, acetylated; mainly by myristic acid but also by a small amount of palmitic acid.

The protein resides in the cell membrane. It localises to the cell junction. It is found in the adherens junction. Its subcellular location is the focal adhesion. The protein localises to the cytoplasm. The protein resides in the cytoskeleton. It localises to the sarcolemma. It is found in the cell projection. Its subcellular location is the podosome. Functionally, actin filament (F-actin)-binding protein involved in cell-matrix adhesion and cell-cell adhesion. Regulates cell-surface E-cadherin expression and potentiates mechanosensing by the E-cadherin complex. May also play important roles in cell morphology and locomotion. The polypeptide is Vinculin (Rattus norvegicus (Rat)).